We begin with the raw amino-acid sequence, 229 residues long: Wtf element wtf14 (229 aa).

Over residues 1–26 the composition is skewed to basic and acidic residues; that stretch reads MENNHHLAKDSLDELNPKRGKGEHET. The interval 1–27 is disordered; that stretch reads MENNHHLAKDSLDELNPKRGKGEHETQ. Helical transmembrane passes span 71-91, 100-120, 151-171, and 188-208; these read IPAV…YLVF, VLFG…LLAT, LYAI…LMFF, and VIGV…PGLF.

It belongs to the WTF family.

The protein localises to the endoplasmic reticulum membrane. Its function is as follows. May act in meiotic drive. This is Wtf element wtf14 from Schizosaccharomyces kambucha (Fission yeast).